A 360-amino-acid chain; its full sequence is Phospho-N-acetylmuramoyl-pentapeptide-transferase (360 aa).

10 helical membrane-spanning segments follow: residues 21 to 41, 73 to 93, 94 to 114, 145 to 165, 168 to 188, 199 to 219, 236 to 256, 263 to 283, 288 to 308, and 339 to 359; these read YLTL…LWLG, TMGG…WGDL, TNHY…IGWV, AVTL…VPLF, VVVP…VGSS, GLAI…AYAS, AGEL…FLWF, VFMG…VAVI, IVLF…MLQV, and IVRF…TLKI.

This sequence belongs to the glycosyltransferase 4 family. MraY subfamily. It depends on Mg(2+) as a cofactor.

The protein localises to the cell inner membrane. The catalysed reaction is UDP-N-acetyl-alpha-D-muramoyl-L-alanyl-gamma-D-glutamyl-meso-2,6-diaminopimeloyl-D-alanyl-D-alanine + di-trans,octa-cis-undecaprenyl phosphate = di-trans,octa-cis-undecaprenyl diphospho-N-acetyl-alpha-D-muramoyl-L-alanyl-D-glutamyl-meso-2,6-diaminopimeloyl-D-alanyl-D-alanine + UMP. The protein operates within cell wall biogenesis; peptidoglycan biosynthesis. In terms of biological role, catalyzes the initial step of the lipid cycle reactions in the biosynthesis of the cell wall peptidoglycan: transfers peptidoglycan precursor phospho-MurNAc-pentapeptide from UDP-MurNAc-pentapeptide onto the lipid carrier undecaprenyl phosphate, yielding undecaprenyl-pyrophosphoryl-MurNAc-pentapeptide, known as lipid I. The chain is Phospho-N-acetylmuramoyl-pentapeptide-transferase from Chromohalobacter salexigens (strain ATCC BAA-138 / DSM 3043 / CIP 106854 / NCIMB 13768 / 1H11).